The sequence spans 634 residues: Chaperone protein HtpG (634 aa).

The interval 1 to 344 (MSETVSQNKE…SNDLPLNVSR (344 aa)) is a; substrate-binding. The segment at 345–561 (EILQDNKVTQ…DYEMGTQMAK (217 aa)) is b. A c region spans residues 562 to 634 (LLAAAGQAVP…GAINKLLTKV (73 aa)).

The protein belongs to the heat shock protein 90 family. In terms of assembly, homodimer.

It localises to the cytoplasm. Molecular chaperone. Has ATPase activity. This is Chaperone protein HtpG from Vibrio parahaemolyticus serotype O3:K6 (strain RIMD 2210633).